A 677-amino-acid polypeptide reads, in one-letter code: Mitochondrial disaggregase (677 aa).

Residues 1 to 57 constitute a mitochondrion transit peptide; the sequence is MMLSAVLRRTAPAPRLFLGLIKSPSLQSRGGAYNRSVITGDRGEPQRLRTAAWVRPG. Residues 64–103 form a disordered region; that stretch reads PGRGAATGGRRGERTEIPYLTAASSGRGPSPEETLPGQDS. The autoinhibitory stretch occupies residues 92-126; sequence PSPEETLPGQDSWNGVPNKAGLGMWALAMALVVQC. 4 ANK repeats span residues 133-162, 166-195, 235-265, and 268-297; these read NKDAALMEAARANNVQEVRRLLSEGADVNA, LGWTALMVAAISHNESVVQVLLAAGADPNL, KGCTALHYAVLADDYSIVKELLGGGANPLQR, and MGHTPLDYAREGEVMKLLKTSETKYMEKQR. 10 residues coordinate ATP: histidine 316, isoleucine 318, serine 353, glycine 354, isoleucine 355, glycine 356, lysine 357, threonine 358, glutamate 425, and asparagine 466. The tract at residues 477–505 is regulatory; slows ATPase and disaggregase activities; that stretch reads LQLRQEALEMSRNRIAENLGDVQISDKIT. Arginine 531 lines the ATP pocket. N6-acetyllysine is present on lysine 559. Arginine 590 serves as a coordination point for ATP.

The protein belongs to the ClpA/ClpB family. Homododecamer when substrate-bound; the homododecamer consists of 2 homohexamers stacked head-to-head via ANK repeat-mediated interactions. The active substrate-bound form is likely to exist in a dynamic equilibrium between homohexamers and homododecamers. Homotetradecamer in the unbound state which is remodeled upon substrate binding into the homododecamer. Interacts with PHB and PHB2. Interacts with MAVS; the interaction is enhanced by Sendai virus infection. Proteolytically cleaved by protease PARL. ATP-dependent protein disaggregase activity is stimulated by PARL-mediated cleavage of the N-terminal autoinhibitory peptide.

It localises to the mitochondrion intermembrane space. The catalysed reaction is ATP + H2O = ADP + phosphate + H(+). Its activity is regulated as follows. Disaggregase activity is inhibited by ADP. Functionally, functions as a regulatory ATPase and participates in secretion/protein trafficking process. Has ATP-dependent protein disaggregase activity and is required to maintain the solubility of key mitochondrial proteins. Involved in mitochondrial-mediated antiviral innate immunity, activates RIG-I-mediated signal transduction and production of IFNB1 and pro-inflammatory cytokine IL6. Plays a role in granulocyte differentiation. This chain is Mitochondrial disaggregase, found in Rattus norvegicus (Rat).